A 644-amino-acid polypeptide reads, in one-letter code: uncharacterized protein (644 aa).

The chain crosses the membrane as a helical span at residues 16-38 (LLSYLGVVGVGIAGLCIYRSVWG). The segment covering 586 to 603 (VRQLQKEAGEGEAEEHPR) has biased composition (basic and acidic residues). The disordered stretch occupies residues 586 to 613 (VRQLQKEAGEGEAEEHPRARPAAGKAQR).

It is found in the membrane. This is an uncharacterized protein from Treponema pallidum (strain Nichols).